The chain runs to 197 residues: MNATVVPPYSGHWLTNTDRMGGLAYGIGVSIGILMLITTITLTSYYCTRSHISASPTTTPRTRRRQRESNGTLPPGQERFDFEDDESDTVVVEVLGLTEEVIKGFPKLPYEEARVSYSLQKESSTTSCCSICLADYKKMDMIRVLPDCNHLFHDNCVDPWLRLHPTCPVCRTSPLPSPAMTPVADVVPFSRRPMMDI.

Residues 20–40 (MGGLAYGIGVSIGILMLITTI) form a helical membrane-spanning segment. A disordered region spans residues 53-80 (SASPTTTPRTRRRQRESNGTLPPGQERF). Residues 129 to 171 (CSICLADYKKMDMIRVLPDCNHLFHDNCVDPWLRLHPTCPVCR) form an RING-type; atypical zinc finger.

Belongs to the RING-type zinc finger family. ATL subfamily.

The protein resides in the membrane. The enzyme catalyses S-ubiquitinyl-[E2 ubiquitin-conjugating enzyme]-L-cysteine + [acceptor protein]-L-lysine = [E2 ubiquitin-conjugating enzyme]-L-cysteine + N(6)-ubiquitinyl-[acceptor protein]-L-lysine.. It participates in protein modification; protein ubiquitination. The sequence is that of Putative RING-H2 finger protein ATL71 (ATL71) from Arabidopsis thaliana (Mouse-ear cress).